A 361-amino-acid chain; its full sequence is Probable pectinesterase 50 (361 aa).

The first 22 residues, 1–22 (MGYISMSVVAFLVVFASPVVLA), serve as a signal peptide directing secretion. Q174 is a binding site for substrate. D197 serves as the catalytic Proton donor. The Nucleophile role is filled by D218. Positions 275 and 277 each coordinate substrate.

It belongs to the pectinesterase family. Expressed in flower buds.

The protein localises to the secreted. It localises to the cell wall. It carries out the reaction [(1-&gt;4)-alpha-D-galacturonosyl methyl ester](n) + n H2O = [(1-&gt;4)-alpha-D-galacturonosyl](n) + n methanol + n H(+). Its pathway is glycan metabolism; pectin degradation; 2-dehydro-3-deoxy-D-gluconate from pectin: step 1/5. Functionally, acts in the modification of cell walls via demethylesterification of cell wall pectin. This is Probable pectinesterase 50 (PME50) from Arabidopsis thaliana (Mouse-ear cress).